The sequence spans 356 residues: 3'-5' exonuclease (356 aa).

A disordered region spans residues 1-120 (MDKYLIKMPT…TPSPEKEKPE (120 aa)). Composition is skewed to basic and acidic residues over residues 29-56 (TIDK…ENTP) and 71-85 (KNQD…IKNE). A compositionally biased stretch (low complexity) spans 99–113 (LTRSTRSMAEEGTPS). Serine 105 and serine 113 each carry phosphoserine. Residues 155 to 316 (TTLDVVPMAF…GQVIYRDLEQ (162 aa)) form the 3'-5' exonuclease domain. Residues aspartate 165, glutamate 167, and aspartate 303 each coordinate Mg(2+).

It belongs to the WRNexo family.

The protein localises to the nucleus. In terms of biological role, has exonuclease activity on both single-stranded and duplex templates bearing overhangs, but not blunt ended duplex DNA, and cleaves in a 3'-5' direction. Essential for the formation of DNA replication focal centers. Has an important role in maintaining genome stability. In Drosophila willistoni (Fruit fly), this protein is 3'-5' exonuclease.